A 306-amino-acid chain; its full sequence is Heme A synthase (306 aa).

Topologically, residues Met1 to Arg5 are cytoplasmic. The chain crosses the membrane as a helical span at residues Ala6–Thr26. The Extracellular portion of the chain corresponds to Ser27–Glu56. An intrachain disulfide couples Cys34 to Cys41. Glu56 is an active-site residue. The chain crosses the membrane as a helical span at residues Phe57–Val77. His59 contacts heme o. The Cytoplasmic portion of the chain corresponds to Ala78–Arg89. The helical transmembrane segment at Leu90 to Leu110 threads the bilayer. Residues Arg111–Leu116 lie on the Extracellular side of the membrane. A helical membrane pass occupies residues Val117–Val137. His121 is a heme o binding site. The Cytoplasmic portion of the chain corresponds to Ala138–Gln164. A helical transmembrane segment spans residues Ile165–Leu185. At Gly186 to Tyr206 the chain is on the extracellular side. Cys191 and Cys197 are disulfide-bonded. Residues Gly207–Leu227 form a helical membrane-spanning segment. Position 215 (His215) interacts with heme b. The Cytoplasmic portion of the chain corresponds to Arg228 to Ala247. Residues Trp248 to Leu268 form a helical membrane-spanning segment. At Asn269–Thr277 the chain is on the extracellular side. His276 is a heme b binding site. A helical transmembrane segment spans residues Gly278–Gly298. At Arg299 to Ala306 the chain is on the cytoplasmic side.

The protein belongs to the COX15/CtaA family. Type 1 subfamily. As to quaternary structure, interacts with CtaB. Heme b serves as cofactor.

The protein localises to the cell membrane. It carries out the reaction Fe(II)-heme o + 2 A + H2O = Fe(II)-heme a + 2 AH2. Its pathway is porphyrin-containing compound metabolism; heme A biosynthesis; heme A from heme O: step 1/1. Catalyzes the conversion of heme O to heme A by two successive hydroxylations of the methyl group at C8. The first hydroxylation forms heme I, the second hydroxylation results in an unstable dihydroxymethyl group, which spontaneously dehydrates, resulting in the formyl group of heme A. The protein is Heme A synthase of Symbiobacterium thermophilum (strain DSM 24528 / JCM 14929 / IAM 14863 / T).